The primary structure comprises 156 residues: Ribosomal RNA large subunit methyltransferase H (156 aa).

Residues Leu73, Gly104, and 123–128 each bind S-adenosyl-L-methionine; that span reads IGPLTL.

It belongs to the RNA methyltransferase RlmH family. Homodimer.

The protein resides in the cytoplasm. It catalyses the reaction pseudouridine(1915) in 23S rRNA + S-adenosyl-L-methionine = N(3)-methylpseudouridine(1915) in 23S rRNA + S-adenosyl-L-homocysteine + H(+). Functionally, specifically methylates the pseudouridine at position 1915 (m3Psi1915) in 23S rRNA. The chain is Ribosomal RNA large subunit methyltransferase H from Xanthomonas axonopodis pv. citri (strain 306).